Consider the following 257-residue polypeptide: MDIHRLPALADNYIFLLHDRQRNQAAVVDPAEAKPVLDCLETLGADLVTIYNTHHHGDHVGANRELLAKYPNLEVYGGVEDQGRIPGQTVFLRDGDRLSFADREATVYFVPGHTRGHIAYYFAPGSGETIGDLFCGDTIFAGGCGRLFEGTPAQMVQSIGKLRQLPDQTRLWCAHEYTLGNLKFALTVDPSNKDLQERFQTVQGDRQRGQATIPSWLGTEKRTNPFLRWDNPAIQARVGMTEPARVFGKLRGMKDNF.

The Zn(2+) site is built by histidine 54, histidine 56, aspartate 58, histidine 59, histidine 113, aspartate 137, and histidine 175.

The protein belongs to the metallo-beta-lactamase superfamily. Glyoxalase II family. As to quaternary structure, monomer. Zn(2+) is required as a cofactor.

The enzyme catalyses an S-(2-hydroxyacyl)glutathione + H2O = a 2-hydroxy carboxylate + glutathione + H(+). It functions in the pathway secondary metabolite metabolism; methylglyoxal degradation; (R)-lactate from methylglyoxal: step 2/2. Its function is as follows. Thiolesterase that catalyzes the hydrolysis of S-D-lactoyl-glutathione to form glutathione and D-lactic acid. The sequence is that of Hydroxyacylglutathione hydrolase from Synechocystis sp. (strain ATCC 27184 / PCC 6803 / Kazusa).